Reading from the N-terminus, the 364-residue chain is 3-isopropylmalate dehydrogenase (364 aa).

Position 79 to 92 (79 to 92 (GPKWNNINETSRPE)) interacts with NAD(+). Arg-100, Arg-110, Arg-139, and Asp-228 together coordinate substrate. Residues Asp-228, Asp-252, and Asp-256 each coordinate Mg(2+). 286-298 (GSAPDIAGKNIAN) serves as a coordination point for NAD(+).

This sequence belongs to the isocitrate and isopropylmalate dehydrogenases family. LeuB type 1 subfamily. Homodimer. The cofactor is Mg(2+). Requires Mn(2+) as cofactor.

It localises to the cytoplasm. It catalyses the reaction (2R,3S)-3-isopropylmalate + NAD(+) = 4-methyl-2-oxopentanoate + CO2 + NADH. It functions in the pathway amino-acid biosynthesis; L-leucine biosynthesis; L-leucine from 3-methyl-2-oxobutanoate: step 3/4. Functionally, catalyzes the oxidation of 3-carboxy-2-hydroxy-4-methylpentanoate (3-isopropylmalate) to 3-carboxy-4-methyl-2-oxopentanoate. The product decarboxylates to 4-methyl-2 oxopentanoate. In Blochmanniella floridana, this protein is 3-isopropylmalate dehydrogenase.